A 196-amino-acid chain; its full sequence is Pyridoxal 5'-phosphate synthase subunit PdxT (196 aa).

L-glutamine is bound at residue 47–49; sequence GES. Cys79 (nucleophile) is an active-site residue. Residues Arg106 and 134–135 each bind L-glutamine; that span reads IR. Active-site charge relay system residues include His170 and Glu172.

The protein belongs to the glutaminase PdxT/SNO family. As to quaternary structure, in the presence of PdxS, forms a dodecamer of heterodimers. Only shows activity in the heterodimer.

It carries out the reaction aldehydo-D-ribose 5-phosphate + D-glyceraldehyde 3-phosphate + L-glutamine = pyridoxal 5'-phosphate + L-glutamate + phosphate + 3 H2O + H(+). The enzyme catalyses L-glutamine + H2O = L-glutamate + NH4(+). The protein operates within cofactor biosynthesis; pyridoxal 5'-phosphate biosynthesis. Functionally, catalyzes the hydrolysis of glutamine to glutamate and ammonia as part of the biosynthesis of pyridoxal 5'-phosphate. The resulting ammonia molecule is channeled to the active site of PdxS. The sequence is that of Pyridoxal 5'-phosphate synthase subunit PdxT from Halalkalibacterium halodurans (strain ATCC BAA-125 / DSM 18197 / FERM 7344 / JCM 9153 / C-125) (Bacillus halodurans).